We begin with the raw amino-acid sequence, 494 residues long: Anaerobic nitric oxide reductase flavorubredoxin (494 aa).

The segment at 30–210 (TKGTSYNSYL…PFSALVTAKI (181 aa)) is zinc metallo-hydrolase. Fe cation-binding residues include histidine 79, glutamate 81, aspartate 83, histidine 147, aspartate 166, and histidine 227. The region spanning 254 to 393 (ITIFYDSMSN…ECREHGQQIA (140 aa)) is the Flavodoxin-like domain. FMN-binding positions include 260 to 264 (SMSNN) and 342 to 369 (AFGS…ETAI). Positions 441–492 (CQCMVCTVCNWVYDPAKGEPNQGIEVGTTWADVPDYFLCPECHLGKDVFVEY) constitute a Rubredoxin-like domain. Fe cation is bound by residues cysteine 446, cysteine 449, cysteine 479, and cysteine 482.

It in the N-terminal section; belongs to the zinc metallo-hydrolase group 3 family. In terms of assembly, homotetramer. Fe cation serves as cofactor. Requires FMN as cofactor.

It is found in the cytoplasm. It functions in the pathway nitrogen metabolism; nitric oxide reduction. In terms of biological role, anaerobic nitric oxide reductase; uses NADH to detoxify nitric oxide (NO), protecting several 4Fe-4S NO-sensitive enzymes. Has at least 2 reductase partners, only one of which (NorW, flavorubredoxin reductase) has been identified. NO probably binds to the di-iron center; electrons enter from the NorW at rubredoxin and are transferred sequentially to the FMN center and the di-iron center. Also able to function as an aerobic oxygen reductase. The polypeptide is Anaerobic nitric oxide reductase flavorubredoxin (Vibrio vulnificus (strain YJ016)).